The chain runs to 429 residues: Probable proton-coupled zinc antiporter SLC30A4 (429 aa).

Topologically, residues 1-113 (MAGSGAWKRL…LLKQRKVKTR (113 aa)) are cytoplasmic. Residues 114–134 (LTIAAVLYLLFMIGELVGGYI) traverse the membrane as a helical segment. Residues 135 to 143 (ANSLAIMTD) are Lumenal-facing. The helical transmembrane segment at 144–164 (ALHMLTDLSAIILTLLALWLS) threads the bilayer. Zn(2+) is bound by residues H146 and D150. The Cytoplasmic portion of the chain corresponds to 165 to 178 (SKSPTKRFTFGFHR). Residues 179 to 199 (LEVLSAMISVLLVYILMGFLL) traverse the membrane as a helical segment. The Lumenal segment spans residues 200–216 (YEAVQRTIHMKYEINGD). A helical membrane pass occupies residues 217–237 (IMLITAAIGVAVNVIMGFLLN). Over 238-274 (QSGHHHAHSHSLPSNSPTTGPRCGHNQGQDSLAVRAA) the chain is Cytoplasmic. Positions 240 to 264 (GHHHAHSHSLPSNSPTTGPRCGHNQ) are zinc binding. The chain crosses the membrane as a helical span at residues 275-295 (FVHALGDLVQSVGVLIAAYII). Zn(2+) contacts are provided by H277 and D281. Residues 296-310 (RFKPEYRIADPICTY) are Lumenal-facing. A helical membrane pass occupies residues 311-331 (VFSLLVAFTTFRIIWDTVVII). At 332–429 (LEGVPSHLNV…TCANCQSSSS (98 aa)) the chain is on the cytoplasmic side.

It belongs to the cation diffusion facilitator (CDF) transporter (TC 2.A.4) family. SLC30A subfamily. In terms of assembly, homodimerization could regulate efficiency for zinc transport. Interacts with TMEM163.

Its subcellular location is the endosome membrane. It localises to the late endosome membrane. It is found in the lysosome membrane. It carries out the reaction Zn(2+)(in) + 2 H(+)(out) = Zn(2+)(out) + 2 H(+)(in). Its function is as follows. Probable proton-coupled zinc ion antiporter mediating zinc import from cytoplasm potentially into the endocytic compartment. Controls zinc deposition in milk. This chain is Probable proton-coupled zinc antiporter SLC30A4, found in Bos taurus (Bovine).